The sequence spans 855 residues: Inactive rhomboid protein 1 (855 aa).

The interval 1-35 (MSEARRDSTSSLQRKKPPWLKLDIPSAAPATAEEP) is disordered. Residues 1–411 (MSEARRDSTS…HRPFFTYWLT (411 aa)) lie on the Cytoplasmic side of the membrane. The segment covering 25–35 (PSAAPATAEEP) has biased composition (low complexity). S76 and S176 each carry phosphoserine. 2 positions are modified to phosphothreonine: T180 and T183. S390 carries the post-translational modification Phosphoserine. Residues 412 to 432 (FVHSLVTILAVCIYGIAPVGF) form a helical membrane-spanning segment. Over 433-655 (SQHETVDSVL…NPEVPDQFYR (223 aa)) the chain is Lumenal. N583 is a glycosylation site (N-linked (GlcNAc...) asparagine). Residues 656-676 (LWLSLFLHAGILHCLVSICFQ) form a helical membrane-spanning segment. Topologically, residues 677–691 (MTVLRDLEKLAGWHR) are cytoplasmic. Residues 692 to 712 (IAIIYLLSGVTGNLASAIFLP) traverse the membrane as a helical segment. At 713-714 (YR) the chain is on the lumenal side. The helical transmembrane segment at 715 to 735 (AEVGPAGSQFGILACLFVELF) threads the bilayer. The Cytoplasmic segment spans residues 736–746 (QSWQILARPWR). Residues 747-767 (AFFKLLAVVLFLFTFGLLPWI) traverse the membrane as a helical segment. Residues 768–772 (DNFAH) are Lumenal-facing. The chain crosses the membrane as a helical span at residues 773–793 (ISGFISGLFLSFAFLPYISFG). Over 794–803 (KFDLYRKRCQ) the chain is Cytoplasmic. The helical transmembrane segment at 804-824 (IIVFQVVFLGLLAGLVVLFYV) threads the bilayer. The Lumenal segment spans residues 825–855 (YPVRCEWCEFLTCIPFTDKFCEKYELDAQLH).

The protein belongs to the peptidase S54 family. In terms of assembly, homodimer, or homooligomer. Interacts with TGFA and HBEGF. Interacts with EGF; may retain EGF in the endoplasmic reticulum and regulates its degradation through the endoplasmic reticulum-associated degradation (ERAD). Interacts (via cytoplasmic N-terminus) with FRMD8/iTAP; this interaction leads to mutual protein stabilization. Interacts with ADAM17/TACE.

It localises to the endoplasmic reticulum membrane. Its subcellular location is the golgi apparatus membrane. Functionally, regulates ADAM17 protease, a sheddase of the epidermal growth factor (EGF) receptor ligands and TNF, thereby plays a role in sleep, cell survival, proliferation, migration and inflammation. Does not exhibit any protease activity on its own. The polypeptide is Inactive rhomboid protein 1 (RHBDF1) (Callithrix jacchus (White-tufted-ear marmoset)).